Consider the following 229-residue polypeptide: Orotidine 5'-phosphate decarboxylase (229 aa).

Substrate is bound by residues D10, K32, 59 to 68 (DLKFHDIPNT), T119, R180, Q189, G209, and R210. The active-site Proton donor is K61.

The protein belongs to the OMP decarboxylase family. Type 1 subfamily. As to quaternary structure, homodimer.

It carries out the reaction orotidine 5'-phosphate + H(+) = UMP + CO2. Its pathway is pyrimidine metabolism; UMP biosynthesis via de novo pathway; UMP from orotate: step 2/2. Catalyzes the decarboxylation of orotidine 5'-monophosphate (OMP) to uridine 5'-monophosphate (UMP). This chain is Orotidine 5'-phosphate decarboxylase, found in Legionella pneumophila (strain Paris).